We begin with the raw amino-acid sequence, 155 residues long: uncharacterized protein (155 aa).

One can recognise an HTH asnC-type domain in the interval 4 to 65; sequence IDEIDEIIVR…VVDTSFFGEF (62 aa). Positions 23–42 form a DNA-binding region, H-T-H motif; it reads LTELGKKVGLTASAVKNRIE.

This is an uncharacterized protein from Pyrococcus abyssi (strain GE5 / Orsay).